The chain runs to 500 residues: Na(+)/H(+) antiporter NhaB (500 aa).

12 consecutive transmembrane segments (helical) span residues 28–50 (FLLL…VLVG), 68–88 (GGLL…ALYA), 98–118 (LLLM…LLLF), 121–141 (LLLG…LAAL), 145–165 (FLDA…FFAV), 205–225 (LLMH…VGEP), 244–264 (QVAP…VLLE), 311–331 (VLIV…LLVI), 350–370 (FQEA…VAVI), 394–414 (MLFI…VATI), 449–469 (VATP…IAPL), and 477–497 (MVWM…WAVS).

This sequence belongs to the NhaB Na(+)/H(+) (TC 2.A.34) antiporter family.

It localises to the cell inner membrane. The catalysed reaction is 2 Na(+)(in) + 3 H(+)(out) = 2 Na(+)(out) + 3 H(+)(in). Na(+)/H(+) antiporter that extrudes sodium in exchange for external protons. The sequence is that of Na(+)/H(+) antiporter NhaB from Pseudomonas aeruginosa (strain LESB58).